The following is a 1060-amino-acid chain: MSKESTRPFPTLPAQIDLPAMEHEVLRRWEEHKIFERSLEQTQGGPTWVFYEGPPTANGTPGVHHVEARVFKDVFPRFKTMKGFYVERKAGWDCHGLPVEVAVEKELGISGKKDIEAFGIAEFNARCRESVLRNVDAFTEMTRRMGYWVNMDEAYRTMDREYVESVWWAIKQIWDKGLLVQDYRISPYCPRCGTTLSDHELAQGYETVTDPSVYVRFPLTSGPLAGQAALLVWTTTPWTLVSNTAVAVHPEVDYVVATDGSEQLVVAEPLVGAALGDGWTLTGQRFKGAELERWTYQRPFELVEFDSPAHFVVLGDYVTVEDGTGLVHQAPAFGADDMQVCRAYGLPVVNPVRNDGTFEEHLDLVGDEFFKTADAALVADLKDRGLLFKHLDYEHSYPHCWRCHTPLMYYAVPSWYIKTTAIKDQLLAENAKTNWVPANVKDGRYGEWLRNNVDWALSRSRYWGTPLPIWEFPDGRRICVGSLKELSELSGQDLSDLDPHRPYVDDIVIPDPDADPSLPLEQRVARRVPEVIDVWFDSGAMPFAQWGAPHRNQEKFEANFPAQYICEAIDQTRGWFYSLMAVSTLVFGRSSYENVVCLGHILAEDGRKMSKHLGNILEPIPVMDRHGADALRWFMAASGSPWMPRRVGHTVLEEIVRKVLLTYYNSASFFTLYAGAGDGWSHEQLADAPAPQDRPLLDRWILSELHSLIKTVDDALERFDTALAGRALTTFIDDLSNWYVRRSRRRFWAGAGTPEGAAAFATLFECLETLTLLMAPIVPFITDHVWQALRRPDAPESVHLASWPKADESLIDPALSEQMALVRRLVELGRAARVDSGQRVRQPLARALVGAPGFAELPEQLRAQIAEELNVVQLDPLSVVGGDLVDYSVKPNFRALGKRFGKTTPRVAQAIREADAKTLVERLRADNAATVDVDGEQVVLSADEVVVTEQPREGWTVASEAGETVALDLELTPELRRAGVAREVIRLVQDARKSSGLNISDRIHLWWSATDEMTAQAMAEHAEAISSEVLAVSFTEGTGDADAYEVVSEEFGITLRLRKA.

A 'HIGH' region motif is present at residues 55-65; sequence PTANGTPGVHH. The 'KMSKS' region motif lies at 608 to 612; the sequence is KMSKH. ATP is bound at residue Lys611.

This sequence belongs to the class-I aminoacyl-tRNA synthetase family. IleS type 2 subfamily. Monomer. The cofactor is Zn(2+).

It is found in the cytoplasm. The enzyme catalyses tRNA(Ile) + L-isoleucine + ATP = L-isoleucyl-tRNA(Ile) + AMP + diphosphate. Catalyzes the attachment of isoleucine to tRNA(Ile). As IleRS can inadvertently accommodate and process structurally similar amino acids such as valine, to avoid such errors it has two additional distinct tRNA(Ile)-dependent editing activities. One activity is designated as 'pretransfer' editing and involves the hydrolysis of activated Val-AMP. The other activity is designated 'posttransfer' editing and involves deacylation of mischarged Val-tRNA(Ile). In Thermobifida fusca (strain YX), this protein is Isoleucine--tRNA ligase.